Consider the following 883-residue polypeptide: MNEQYSALRSNVSMLGKVLGETIKDALGEHILERVETIRKLSKSSRAGNDANRQELLTTLQNLSNDELLPVARAFSQFLNLANTAEQYHSISPKGEAASNPEVIARTLRKLKNQPELSEDTIKKAVESLSLELVLTAHPTEITRRTLIHKMVEVNACLKQLDNKDIADYERNQLMRRLRQLIAQSWHTDEIRKLRPSPVDEAKWGFAVVENSLWQGVPNYLRELNEQLEENLGYKLPVEFVPVRFTSWMGGDRDGNPNVTADITRHVLLLSRWKATDLFLKDIQVLVSELSMVEATPELLALVGEEGAAEPYRYLMKNLRSRLMATQAWLEARLKGEELPKPEGLLTQNEELWEPLYACYQSLQACGMGIIANGDLLDTLRRVKCFGVPLVRIDIRQESTRHTEALGELTRYLGIGDYESWSEADKQAFLIRELNSKRPLLPRNWQPSAETREVLDTCQVIAEAPQGSIAAYVISMAKTPSDVLAVHLLLKEAGIGFAMPVAPLFETLDDLNNANDVMTQLLNIDWYRGLIQGKQMVMIGYSDSAKDAGVMAASWAQYQAQDALIKTCEKAGIELTLFHGRGGSIGRGGAPAHAALLSQPPGSLKGGLRVTEQGEMIRFKYGLPEITVSSLSLYTGAILEANLLPPPEPKESWRRIMDELSVISCDLYRGYVRENKDFVPYFRSATPEQELGKLPLGSRPAKRRPTGGVESLRAIPWIFAWTQNRLMLPAWLGAGTALQKVVEDGKQSELEAMCRDWPFFSTRLGMLEMVFAKADLWLAEYYDQRLVDKALWPLGKELRNLQEEDIKVVLAIANDSHLMADLPWIAESIQLRNIYTDPLNVLQAELLHRSRQAEKEGQEPDPRVEQALMVTIAGIAAGMRNTG.

Catalysis depends on residues His138 and Lys546.

This sequence belongs to the PEPCase type 1 family. Mg(2+) serves as cofactor.

The catalysed reaction is oxaloacetate + phosphate = phosphoenolpyruvate + hydrogencarbonate. Forms oxaloacetate, a four-carbon dicarboxylic acid source for the tricarboxylic acid cycle. This chain is Phosphoenolpyruvate carboxylase, found in Shigella flexneri.